The chain runs to 935 residues: uncharacterized protein (935 aa).

Disordered stretches follow at residues 1–32 (MDIGLITNKEDDEENDLSIKSPYSTTKNQNNN), 74–228 (NNNN…YNNG), 265–287 (NNENKKKNNDNENNNYPNFNNNN), 342–376 (NQQKHQKKIQHQENSNFEQLEKPEQLSHNSESSKT), 394–414 (SPTQQQQQQQQQQQQQQQQQY), 466–491 (KNINNNNSNNNNNNNNNNNNNNNNNI), 516–559 (PHQQ…TSTI), 727–755 (SPSSSTSSETTTSTSTTTNNTSTTTISPS), and 778–799 (GGGSSGGGGSGGGVNNNNNVQN). Positions 74-227 (NNNNNTTNNN…NNNDDNIYNN (154 aa)) are enriched in low complexity. The stretch at 262–331 (KKNNNENKKK…NNINNNNNKI (70 aa)) forms a coiled coil. Positions 265 to 274 (NNENKKKNND) are enriched in basic and acidic residues. A compositionally biased stretch (low complexity) spans 275 to 287 (NENNNYPNFNNNN). Polar residues predominate over residues 367 to 376 (LSHNSESSKT). Residues 397-414 (QQQQQQQQQQQQQQQQQY) are compositionally biased toward low complexity. Residues 522 to 559 (SSPTSSSTSTSSTTSSSSSSSSSSSSSSSSSTSSTSTI) are compositionally biased toward low complexity. The span at 778–791 (GGGSSGGGGSGGGV) shows a compositional bias: gly residues.

This is an uncharacterized protein from Dictyostelium discoideum (Social amoeba).